The primary structure comprises 320 residues: Cytochrome f (320 aa).

The signal sequence occupies residues 1–35 (MENRKTFSWLKEQMIRSISVSIMIYVITRTSISNA). Positions 36, 56, 59, and 60 each coordinate heme. A helical transmembrane segment spans residues 286 to 306 (VQGLLFFFASVILAQVFLVLK).

It belongs to the cytochrome f family. In terms of assembly, the 4 large subunits of the cytochrome b6-f complex are cytochrome b6, subunit IV (17 kDa polypeptide, petD), cytochrome f and the Rieske protein, while the 4 small subunits are PetG, PetL, PetM and PetN. The complex functions as a dimer. Heme is required as a cofactor.

The protein resides in the plastid. The protein localises to the chloroplast thylakoid membrane. Functionally, component of the cytochrome b6-f complex, which mediates electron transfer between photosystem II (PSII) and photosystem I (PSI), cyclic electron flow around PSI, and state transitions. This is Cytochrome f from Saccharum hybrid (Sugarcane).